The sequence spans 129 residues: Protein BUNDLE SHEATH DEFECTIVE 2, chloroplastic (129 aa).

Residues 1–43 (MAATASLTTTAPSPPALLKASAPLLISFRPVSRHCKNLCIKTK) constitute a chloroplast transit peptide. The CR-type zinc-finger motif lies at 49–123 (QSAKKHQKVK…AGFLGGFLST (75 aa)). Zn(2+) contacts are provided by C62, C65, N68, C73, C76, C97, C100, E105, C108, and C111.

This sequence belongs to the BSD2 chaperone family. In terms of assembly, interacts with the RuBisCo large subunit (RbcL) assembled as an intermediate complex made of eight RbcL and eight BSD2 subunits. As to expression, expressed in shoot tissues, in both bundle sheath and mesophyll cells.

It localises to the plastid. The protein localises to the chloroplast stroma. Functionally, chloroplast chaperone required for RuBisCo complex biogenesis and translational regulation of the RuBisCo large subunit (RbcL). Stabilizes an end-state assembly intermediate of eight RbcL subunits until the small subunits (RBCSs) become available to produce a complete stable RuBisCo complex containing eight small and eight large subunits. Involved in the differentiation of bundle sheath cells, especially chloroplast structure. This is Protein BUNDLE SHEATH DEFECTIVE 2, chloroplastic from Zea mays (Maize).